The primary structure comprises 313 residues: Iron-sulfur protein required for NADH dehydrogenase, mitochondrial (313 aa).

A mitochondrion-targeting transit peptide spans 1–22 (MATVALLRSLRRRELHAAHISA). 51 to 58 (GKGGVGKS) provides a ligand contact to ATP.

This sequence belongs to the Mrp/NBP35 ATP-binding proteins family. The cofactor is [4Fe-4S] cluster.

It is found in the mitochondrion matrix. Essential during early vegetative growth. Required for the assembly of the mitochondrial membrane respiratory chain NADH dehydrogenase (Complex I). Involved in mitochondrial translation activity. May deliver of one or more Fe-S clusters to complex I subunits. This Arabidopsis thaliana (Mouse-ear cress) protein is Iron-sulfur protein required for NADH dehydrogenase, mitochondrial.